We begin with the raw amino-acid sequence, 203 residues long: Small ribosomal subunit protein uS4c (203 aa).

The region spanning 89-152 is the S4 RNA-binding domain; it reads MRLDNILFRL…QSRTLIQNSL (64 aa).

It belongs to the universal ribosomal protein uS4 family. As to quaternary structure, part of the 30S ribosomal subunit. Contacts protein S5. The interaction surface between S4 and S5 is involved in control of translational fidelity.

The protein resides in the plastid. Its function is as follows. One of the primary rRNA binding proteins, it binds directly to 16S rRNA where it nucleates assembly of the body of the 30S subunit. Functionally, with S5 and S12 plays an important role in translational accuracy. This Orobanche minor (Small broomrape) protein is Small ribosomal subunit protein uS4c (rps4).